We begin with the raw amino-acid sequence, 256 residues long: MGIASSLRLFGKAPASYLFNGFRRQMKNPLMKKGVVYAGVSGTCAAAGYMFGNFVMEKHIYQVKYTEEQEKEVLEVENRLQNLKIVKDLRQNPSFRELRMPFNRSNHSLTNNLLSGPGRITVPPVIFYDKSTRQVYAIAHVGKDVGLDDDTIHPGLIATCMDEVLAICSFLSLPNKIAVTANLKLSNPTKAYTNHFYILRSHLEWTKGRKAQTHGTAYMLDNEDPSKSTCVAIADGLFVEPRFAKYLKHVIPVSLP.

Residues 34 to 56 traverse the membrane as a helical segment; it reads GVVYAGVSGTCAAAGYMFGNFVM.

Belongs to the UPF0644 family.

The protein localises to the mitochondrion membrane. In Schizosaccharomyces pombe (strain 972 / ATCC 24843) (Fission yeast), this protein is UPF0644 protein PB2B4.06.